The chain runs to 243 residues: Tryptophan synthase alpha chain (243 aa).

Active-site proton acceptor residues include Glu32 and Asp43.

This sequence belongs to the TrpA family. Tetramer of two alpha and two beta chains.

It localises to the plastid. The protein resides in the chloroplast. The enzyme catalyses (1S,2R)-1-C-(indol-3-yl)glycerol 3-phosphate + L-serine = D-glyceraldehyde 3-phosphate + L-tryptophan + H2O. It functions in the pathway amino-acid biosynthesis; L-tryptophan biosynthesis; L-tryptophan from chorismate: step 5/5. Functionally, the alpha subunit is responsible for the aldol cleavage of indoleglycerol phosphate to indole and glyceraldehyde 3-phosphate. The protein is Tryptophan synthase alpha chain of Cyanidioschyzon merolae (strain NIES-3377 / 10D) (Unicellular red alga).